We begin with the raw amino-acid sequence, 82 residues long: Small ribosomal subunit protein uS17c (82 aa).

This sequence belongs to the universal ribosomal protein uS17 family. Part of the 30S ribosomal subunit.

The protein localises to the plastid. Its subcellular location is the chloroplast. Its function is as follows. One of the primary rRNA binding proteins, it binds specifically to the 5'-end of 16S ribosomal RNA. This is Small ribosomal subunit protein uS17c (rps17) from Cyanidioschyzon merolae (strain NIES-3377 / 10D) (Unicellular red alga).